The following is a 508-amino-acid chain: Ribonuclease Y (508 aa).

A helical transmembrane segment spans residues 1–21 (MMLWYIVAGAGGLLIGYLIAN). Residues 198 to 283 (TVSTVSLPSD…EMYEKAKQEV (86 aa)) form the KH domain. The HD domain maps to 324–417 (VLNHSIEVAL…VAAADALSAA (94 aa)).

The protein belongs to the RNase Y family.

It is found in the cell membrane. Functionally, endoribonuclease that initiates mRNA decay. The chain is Ribonuclease Y from Thermotoga maritima (strain ATCC 43589 / DSM 3109 / JCM 10099 / NBRC 100826 / MSB8).